Consider the following 141-residue polypeptide: MAKKVVAVVKLQIPAGKATPAPPVGPALGQHGVNIMAFVKEYNERTAQQAGMIIPVEITVYEDRSFTFVTKTPPASDLLKKAAGIESGSGQPNKKKVGKVTRAKIREIAELKLKDLNANDVEAAMRMIEGTARSMGIEVVD.

Belongs to the universal ribosomal protein uL11 family. As to quaternary structure, part of the ribosomal stalk of the 50S ribosomal subunit. Interacts with L10 and the large rRNA to form the base of the stalk. L10 forms an elongated spine to which L12 dimers bind in a sequential fashion forming a multimeric L10(L12)X complex. One or more lysine residues are methylated.

In terms of biological role, forms part of the ribosomal stalk which helps the ribosome interact with GTP-bound translation factors. The chain is Large ribosomal subunit protein uL11 from Carboxydothermus hydrogenoformans (strain ATCC BAA-161 / DSM 6008 / Z-2901).